Consider the following 256-residue polypeptide: uncharacterized protein (256 aa).

The signal sequence occupies residues 1–24 (MIKRVNKLVLGISLLFLVISITAG). Cysteine 25 carries N-palmitoyl cysteine lipidation. Residue cysteine 25 is the site of S-diacylglycerol cysteine attachment.

The protein belongs to the staphylococcal tandem lipoprotein family.

Its subcellular location is the cell membrane. This is an uncharacterized protein from Staphylococcus aureus.